A 419-amino-acid chain; its full sequence is Gamma-glutamyl phosphate reductase (419 aa).

The protein belongs to the gamma-glutamyl phosphate reductase family.

The protein resides in the cytoplasm. The catalysed reaction is L-glutamate 5-semialdehyde + phosphate + NADP(+) = L-glutamyl 5-phosphate + NADPH + H(+). Its pathway is amino-acid biosynthesis; L-proline biosynthesis; L-glutamate 5-semialdehyde from L-glutamate: step 2/2. Catalyzes the NADPH-dependent reduction of L-glutamate 5-phosphate into L-glutamate 5-semialdehyde and phosphate. The product spontaneously undergoes cyclization to form 1-pyrroline-5-carboxylate. This Yersinia pestis protein is Gamma-glutamyl phosphate reductase.